Here is a 134-residue protein sequence, read N- to C-terminus: ATP synthase epsilon chain (134 aa).

Belongs to the ATPase epsilon chain family. As to quaternary structure, F-type ATPases have 2 components, CF(1) - the catalytic core - and CF(0) - the membrane proton channel. CF(1) has five subunits: alpha(3), beta(3), gamma(1), delta(1), epsilon(1). CF(0) has three main subunits: a, b and c.

It localises to the cell inner membrane. In terms of biological role, produces ATP from ADP in the presence of a proton gradient across the membrane. This chain is ATP synthase epsilon chain, found in Sinorhizobium medicae (strain WSM419) (Ensifer medicae).